Consider the following 76-residue polypeptide: Defensin-like protein 164 (76 aa).

Residues M1 to A25 form the signal peptide. 4 cysteine pairs are disulfide-bonded: C31–C76, C41–C61, C46–C70, and C50–C72.

It belongs to the DEFL family.

The protein localises to the secreted. This chain is Defensin-like protein 164 (LCR38), found in Arabidopsis thaliana (Mouse-ear cress).